Reading from the N-terminus, the 289-residue chain is ATP synthase gamma chain (289 aa).

Belongs to the ATPase gamma chain family. In terms of assembly, F-type ATPases have 2 components, CF(1) - the catalytic core - and CF(0) - the membrane proton channel. CF(1) has five subunits: alpha(3), beta(3), gamma(1), delta(1), epsilon(1). CF(0) has three main subunits: a, b and c.

It is found in the cell inner membrane. Its function is as follows. Produces ATP from ADP in the presence of a proton gradient across the membrane. The gamma chain is believed to be important in regulating ATPase activity and the flow of protons through the CF(0) complex. The sequence is that of ATP synthase gamma chain from Janthinobacterium sp. (strain Marseille) (Minibacterium massiliensis).